We begin with the raw amino-acid sequence, 552 residues long: Glutamine--tRNA ligase (552 aa).

Positions 33–43 (PEPNGYLHIGH) match the 'HIGH' region motif. Residues 34-36 (EPN) and 40-46 (HIGHAKS) each bind ATP. Positions 66 and 210 each coordinate L-glutamine. ATP contacts are provided by residues T229, 259–260 (RL), and 267–269 (MSK). The short motif at 266-270 (VMSKR) is the 'KMSKS' region element.

This sequence belongs to the class-I aminoacyl-tRNA synthetase family. Monomer.

It is found in the cytoplasm. It carries out the reaction tRNA(Gln) + L-glutamine + ATP = L-glutaminyl-tRNA(Gln) + AMP + diphosphate. In Clostridium perfringens (strain ATCC 13124 / DSM 756 / JCM 1290 / NCIMB 6125 / NCTC 8237 / Type A), this protein is Glutamine--tRNA ligase.